Reading from the N-terminus, the 615-residue chain is MPKLRSATSTEGRNMAGARALWRATGVKDNDFGKPIIAIANSFTQFVPGHVHLKDMGSLVAGAIEEAGGIAKEFNTIAVDDGIAMGHGGMLYSLPSRELIADSVEYMVNAHCADALVCISNCDKITPGMLMASLRLNIPVIFVSGGPMEAGKTKLSDQLIKLDLVDAMVAGADSRVSDADSEQIERSACPTCGSCSGMFTANSMNCLTEALGLSLPGNGSMLATHADRRELFLEAGRRIMDLATRYYQHDDESALPRNIANFKAFENAMTLDIAMGGSSNTVLHLLASAQEGEVDFTMDDIDRLSRLVPHLCKVAPSTPKYHMEDVHRAGGVMGILGELDRANLLHNDVYHVAGSNLADVLARFDIVQTDDAAVHKFFSAGPAGIPTTKAFSQDCRWDSVDNDRKEGCIRSREFAFSQEGGLAVLSGNVALDGCIVKTAGVEVENHTFIGSARVFESQDDAVAGILGGEVVAGDVVVIRYEGPKGGPGMQEMLYPTSYLKSRGLGTKCALITDGRFSGGTSGLSIGHVSPEAAAGGTIGLVQTGDRIEIDIPARSIKLAISDIELAARRTAMEALGKDAWKPLGRVRQVSMALKAYALLATSADKGAVRDTSKLV.

Position 81 (Asp-81) interacts with Mg(2+). Cys-122 contributes to the [2Fe-2S] cluster binding site. Mg(2+)-binding residues include Asp-123 and Lys-124. Position 124 is an N6-carboxylysine (Lys-124). Cys-195 is a binding site for [2Fe-2S] cluster. Position 491 (Glu-491) interacts with Mg(2+). The active-site Proton acceptor is the Ser-517.

It belongs to the IlvD/Edd family. In terms of assembly, homodimer. [2Fe-2S] cluster serves as cofactor. Requires Mg(2+) as cofactor.

It catalyses the reaction (2R)-2,3-dihydroxy-3-methylbutanoate = 3-methyl-2-oxobutanoate + H2O. It carries out the reaction (2R,3R)-2,3-dihydroxy-3-methylpentanoate = (S)-3-methyl-2-oxopentanoate + H2O. It participates in amino-acid biosynthesis; L-isoleucine biosynthesis; L-isoleucine from 2-oxobutanoate: step 3/4. The protein operates within amino-acid biosynthesis; L-valine biosynthesis; L-valine from pyruvate: step 3/4. Functionally, functions in the biosynthesis of branched-chain amino acids. Catalyzes the dehydration of (2R,3R)-2,3-dihydroxy-3-methylpentanoate (2,3-dihydroxy-3-methylvalerate) into 2-oxo-3-methylpentanoate (2-oxo-3-methylvalerate) and of (2R)-2,3-dihydroxy-3-methylbutanoate (2,3-dihydroxyisovalerate) into 2-oxo-3-methylbutanoate (2-oxoisovalerate), the penultimate precursor to L-isoleucine and L-valine, respectively. This Shewanella halifaxensis (strain HAW-EB4) protein is Dihydroxy-acid dehydratase.